Consider the following 202-residue polypeptide: LexA repressor (202 aa).

The H-T-H motif DNA-binding region spans 32–52 (RAEVCSAFGFKSPNAAETHLR). Active-site for autocatalytic cleavage activity residues include S121 and K158.

It belongs to the peptidase S24 family. Homodimer.

It carries out the reaction Hydrolysis of Ala-|-Gly bond in repressor LexA.. In terms of biological role, represses a number of genes involved in the response to DNA damage (SOS response), including recA and lexA. In the presence of single-stranded DNA, RecA interacts with LexA causing an autocatalytic cleavage which disrupts the DNA-binding part of LexA, leading to derepression of the SOS regulon and eventually DNA repair. In Azoarcus sp. (strain BH72), this protein is LexA repressor.